Consider the following 872-residue polypeptide: Potassium voltage-gated channel subfamily KQT member 3 (872 aa).

The interval 1–43 (MGLKARRAAGAAGGGGDGGGGGGGAANPAGGDAAAAGDEERKV) is disordered. The Cytoplasmic portion of the chain corresponds to 1–120 (MGLKARRAAG…IYDALERPRG (120 aa)). The span at 11 to 25 (AAGGGGDGGGGGGGA) shows a compositional bias: gly residues. Low complexity predominate over residues 26–36 (ANPAGGDAAAA). Residue Thr-81 is modified to Phosphothreonine. Residues 121-143 (WALLYHALVFLIVLGCLILAVLT) traverse the membrane as a helical segment. Over 144-153 (TFKEYETVSG) the chain is Extracellular. The chain crosses the membrane as a helical span at residues 154–175 (DWLLLLETFAIFIFGAEFALRI). Residues 176–193 (WAAGCCCRYKGWRGRLKF) lie on the Cytoplasmic side of the membrane. The helical transmembrane segment at 194–213 (ARKPLCMLDIFVLIASVPVV) threads the bilayer. Over 214 to 225 (AVGNQGNVLATS) the chain is Extracellular. Residues 226-244 (LRSLRFLQILRMLRMDRRG) form a helical; Voltage-sensor membrane-spanning segment. Arg-243 contributes to the a 1,2-diacyl-sn-glycero-3-phospho-(1D-myo-inositol-4,5-bisphosphate) binding site. The Cytoplasmic segment spans residues 245–256 (GTWKLLGSAICA). Thr-246 carries the post-translational modification Phosphothreonine. Residues 257 to 282 (HSKELITAWYIGFLTLILSSFLVYLV) traverse the membrane as a helical segment. Residue Lys-259 coordinates a 1,2-diacyl-sn-glycero-3-phospho-(1D-myo-inositol-4,5-bisphosphate). The Extracellular portion of the chain corresponds to 283–302 (EKDVPEVDAQGEEMKEEFET). Residues 303 to 315 (YADALWWGLITLA) constitute an intramembrane region (pore-forming). Positions 316–321 (TIGYGD) match the Selectivity filter motif. At 316–326 (TIGYGDKTPKT) the chain is on the extracellular side. Residues 327–353 (WEGRLIAATFSLIGVSFFALPAGILGS) form a helical membrane-spanning segment. Residues 354–872 (GLALKVQEQH…SVWTPSNKPI (519 aa)) lie on the Cytoplasmic side of the membrane. The tract at residues 356–537 (ALKVQEQHRQ…RLYKKKFKET (182 aa)) is mediates interaction with calmodulin. Lys-366 provides a ligand contact to a 1,2-diacyl-sn-glycero-3-phospho-(1D-myo-inositol-4,5-bisphosphate). Disordered stretches follow at residues 575–611 (GPPS…PSTS) and 764–872 (ADLQ…NKPI). Polar residues-rich tracts occupy residues 587–600 (KGSA…QSPR) and 843–872 (DPFT…NKPI).

The protein belongs to the potassium channel family. KQT (TC 1.A.1.15) subfamily. Kv7.3/KCNQ3 sub-subfamily. Heterotetramer with KCNQ2; forms heterotetrameric native M-channel responsible for the M-current. Interacts with calmodulin; the interaction is calcium-independent, constitutive and participates in the proper assembly of a functional M-channel. Heteromultimer with KCNQ5. May associate with KCNE2. Interacts with IQCJ-SCHIP1. Interacts (via the pore module) with SLC5A3/SMIT1; forms a coregulatory complex that alters ion selectivity, voltage dependence and gating kinetics of the channel. Post-translationally, KCNQ2/KCNQ3 are ubiquitinated by NEDD4L. Ubiquitination leads to protein degradation. Degradation induced by NEDD4L is inhibited by USP36. As to expression, predominantly expressed in brain.

It localises to the cell membrane. It carries out the reaction K(+)(in) = K(+)(out). It catalyses the reaction Rb(+)(in) = Rb(+)(out). The enzyme catalyses Cs(+)(in) = Cs(+)(out). The catalysed reaction is Na(+)(in) = Na(+)(out). Phosphatidylinositol-4,5-bisphosphate (PIP2) potentiates the activation of KCNQ channels by enhancing the electro-mechanical coupling of the voltage-sensing domain (VSD) and the pore-forming domain (PD). In the closed state of the channel, PIP2 is anchored at the S2-S3 loop; upon channel activation, PIP2 interacts with the S4-S5 linker and is involved in channel gating. Calcium suppresses KCNQ2-KCNQ3 channel currents, with calcium-bound calmodulin inducing a change in channel configuration which leads to the reduction of channel affinity for PIP2 and subsequent current suppression. M-channel is activated by the anticonvulsant retigabine. Pore-forming subunit of the voltage-gated potassium (Kv) M-channel which is responsible for the M-current, a key controller of neuronal excitability. M-channel is composed of pore-forming subunits KCNQ2 and KCNQ3 assembled as heterotetramers. The native M-current has a slowly activating and deactivating potassium conductance which plays a critical role in determining the subthreshold electrical excitability of neurons as well as the responsiveness to synaptic inputs. M-channel is selectively permeable in vitro to other cations besides potassium, in decreasing order of affinity K(+) &gt; Rb(+) &gt; Cs(+) &gt; Na(+). M-channel association with SLC5A3/SMIT1 alters channel ion selectivity, increasing Na(+) and Cs(+) permeation relative to K(+). Suppressed by activation of M1 muscarinic acetylcholine receptors. KCNQ3 also associates with KCNQ5 to form a functional channel in vitro and may also contribute to the M-current in brain. The sequence is that of Potassium voltage-gated channel subfamily KQT member 3 from Homo sapiens (Human).